Here is a 468-residue protein sequence, read N- to C-terminus: Intramembrane protease 2 (468 aa).

The Lumenal portion of the chain corresponds to 1–22; that stretch reads MAEAATEIPPTASNVTVFTFEE. N-linked (GlcNAc...) asparagine glycosylation is present at Asn-14. The helical transmembrane segment at 23 to 43 threads the bilayer; it reads QATSSLALYGMSILCIIIGSI. The Cytoplasmic segment spans residues 44-70; the sequence is RSAQYIRTNIDKKRLIEGSITMREARK. A helical membrane pass occupies residues 71–91; it reads FPISASLVLFGLYLFFKPAAE. Residues 92 to 168 lie on the Lumenal side of the membrane; sequence RFLWVARVFQ…TNLPTIQKAE (77 aa). 2 N-linked (GlcNAc...) asparagine glycosylation sites follow: Asn-114 and Asn-123. Residues 169 to 189 form a helical membrane-spanning segment; the sequence is CMQLLTFLICFEGVNAFASLL. Over 190–247 the chain is Cytoplasmic; it reads KPFVTAFLKKMPLVPSFLRFNAPYLFSLKKGNKEMEEGDIEDAKKKETEYLFKIDFDR. A helical transmembrane segment spans residues 248–265; that stretch reads YDIIALLMCSPILISHLL. At 266–267 the chain is on the lumenal side; that stretch reads KR. The chain crosses the membrane as a helical span at residues 268 to 284; it reads HWITNNIIGVSFSILGI. Over 285–296 the chain is Cytoplasmic; the sequence is ERLHLASFKAGS. The helical transmembrane segment at 297-317 threads the bilayer; that stretch reads LLLVGLFFYDIFWVFGTDVMT. Asp-306 is a catalytic residue. The Lumenal portion of the chain corresponds to 318–343; the sequence is SVAKGIDAPILLQFPQDIYRNGIMEA. A helical transmembrane segment spans residues 344–364; sequence SKHSMLGLGDIVIPGIFIALL. The active site involves Asp-353. The Cytoplasmic segment spans residues 365 to 388; sequence RRFDYRVVQTTAESKAPQGSLKGR. A helical transmembrane segment spans residues 389–409; that stretch reads YYFVVTVVAYMAGLFITMAVM. The Lumenal portion of the chain corresponds to 410–415; that stretch reads HHFKAA. A helical membrane pass occupies residues 416–436; it reads QPALLYLVPCCLFVPLLLAVI. A PAL motif is present at residues 417–419; sequence PAL. Residues 437 to 468 are Cytoplasmic-facing; that stretch reads RGELSALWNYDESRHVDNEENRKKVDSGKKNN.

This sequence belongs to the peptidase A22B family.

It localises to the membrane. It is found in the endoplasmic reticulum membrane. Its function is as follows. Acts as intramembrane protease. In larvae, required for the complete shedding of the cuticle during molting, possibly by regulating cholesterol uptake via lrp-1. Involved in embryonic and larval development. The polypeptide is Intramembrane protease 2 (Caenorhabditis elegans).